A 308-amino-acid polypeptide reads, in one-letter code: Acetaldehyde dehydrogenase 2 (308 aa).

9 to 12 is an NAD(+) binding site; sequence SGNI. The active-site Acyl-thioester intermediate is the Cys127. Residues 158-166 and Asn286 contribute to the NAD(+) site; that span reads SAGPGTRAN.

This sequence belongs to the acetaldehyde dehydrogenase family.

The enzyme catalyses acetaldehyde + NAD(+) + CoA = acetyl-CoA + NADH + H(+). The chain is Acetaldehyde dehydrogenase 2 from Parafrankia sp. (strain EAN1pec).